The chain runs to 215 residues: uncharacterized protein (215 aa).

S-adenosyl-L-methionine-binding residues include Gly-53, Glu-74, and Asp-97.

This sequence belongs to the methyltransferase superfamily. YrrT family.

Its function is as follows. Could be a S-adenosyl-L-methionine-dependent methyltransferase. This is an uncharacterized protein from Geobacillus thermodenitrificans (strain NG80-2).